Here is a 102-residue protein sequence, read N- to C-terminus: Small ribosomal subunit protein eS24 (102 aa).

Belongs to the eukaryotic ribosomal protein eS24 family.

In Methanococcus maripaludis (strain DSM 14266 / JCM 13030 / NBRC 101832 / S2 / LL), this protein is Small ribosomal subunit protein eS24.